Consider the following 109-residue polypeptide: Large ribosomal subunit protein uL24 (109 aa).

The protein belongs to the universal ribosomal protein uL24 family. As to quaternary structure, part of the 50S ribosomal subunit.

Functionally, one of two assembly initiator proteins, it binds directly to the 5'-end of the 23S rRNA, where it nucleates assembly of the 50S subunit. One of the proteins that surrounds the polypeptide exit tunnel on the outside of the subunit. This chain is Large ribosomal subunit protein uL24, found in Rickettsia bellii (strain RML369-C).